We begin with the raw amino-acid sequence, 631 residues long: DNA mismatch repair protein MutL (631 aa).

The protein belongs to the DNA mismatch repair MutL/HexB family.

Its function is as follows. This protein is involved in the repair of mismatches in DNA. It is required for dam-dependent methyl-directed DNA mismatch repair. May act as a 'molecular matchmaker', a protein that promotes the formation of a stable complex between two or more DNA-binding proteins in an ATP-dependent manner without itself being part of a final effector complex. This is DNA mismatch repair protein MutL from Lactobacillus acidophilus (strain ATCC 700396 / NCK56 / N2 / NCFM).